The primary structure comprises 606 residues: DNA mismatch repair protein MutL (606 aa).

Positions 340-366 (MNAFRPGYSPSGLRPSPSATWSAATSP) are disordered. Over residues 353–366 (RPSPSATWSAATSP) the composition is skewed to low complexity.

The protein belongs to the DNA mismatch repair MutL/HexB family.

This protein is involved in the repair of mismatches in DNA. It is required for dam-dependent methyl-directed DNA mismatch repair. May act as a 'molecular matchmaker', a protein that promotes the formation of a stable complex between two or more DNA-binding proteins in an ATP-dependent manner without itself being part of a final effector complex. The chain is DNA mismatch repair protein MutL from Agrobacterium fabrum (strain C58 / ATCC 33970) (Agrobacterium tumefaciens (strain C58)).